The primary structure comprises 1166 residues: Poly [ADP-ribose] polymerase tankyrase-2 (1166 aa).

ANK repeat units lie at residues 23-52, 57-86, 90-119, and 123-152; these read PSAR…VNSR, RKST…NVQA, GGLI…DPNA, and WNYT…EPTI. Asn-203 is modified ((3S)-3-hydroxyasparagine; by HIF1AN). 7 ANK repeats span residues 210–239, 243–272, 276–305, 363–395, 399–428, 432–461, and 463–489; these read RKST…DVHA, GDLV…CVNA, WQFT…DPTL, THET…NTNE, EFLT…KVNA, LGQT…DPNI, and SLQG…SLGH. At His-238 the chain carries (3S)-3-hydroxyhistidine; by HIF1AN. Asn-271 bears the (3S)-3-hydroxyasparagine; by HIF1AN mark. Residue Asn-427 is modified to (3S)-3-hydroxyasparagine; by HIF1AN. Residue Asn-518 is modified to (3S)-3-hydroxyasparagine; by HIF1AN. ANK repeat units lie at residues 525–554, 558–587, 591–620, and 624–652; these read RQST…DVHA, GGLV…VVNV, WKFT…DPTK, and DGNT…LLDA. Residues 545 to 553 form an HIF1AN-binding region; it reads LLQHGADVH. His-553 is subject to (3S)-3-hydroxyhistidine; by HIF1AN. Asn-586 carries the post-translational modification (3S)-3-hydroxyasparagine; by HIF1AN. 3 positions are modified to (3S)-3-hydroxyasparagine; by HIF1AN: Asn-671, Asn-706, and Asn-739. ANK repeat units follow at residues 678–707, 711–740, and 744–773; these read RHST…DVNA, GGLI…CVNA, and WAFT…DPTL. Residues 873-936 enclose the SAM domain; sequence GIDFSITQFI…IKGVERLISG (64 aa). The 206-residue stretch at 959–1164 folds into the PARP catalytic domain; sequence SPDDKEFQSV…YQIVRPEGMV (206 aa). Zn(2+) contacts are provided by Cys-1081, His-1084, Cys-1089, and Cys-1092.

Belongs to the ARTD/PARP family. As to quaternary structure, oligomerizes and associates with TNKS. Interacts with the cytoplasmic domain of LNPEP/Otase in SLC2A4/GLUT4-vesicles. Binds to the N-terminus of Grb14 and TRF1 with its ankyrin repeat region. Interacts with HIF1AN. Interacts with RNF146; this interaction leads to ubiquitination and proteasomal degradation. Interacts with NUMA1. Post-translationally, ubiquitinated by RNF146 when auto-poly-ADP-ribosylated, leading to its degradation. Deubiquitinated by USP25; leading to stabilization. ADP-ribosylated (-auto). Poly-ADP-ribosylated protein is recognized by RNF146, followed by ubiquitination.

The protein resides in the cytoplasm. Its subcellular location is the golgi apparatus membrane. It is found in the nucleus. It localises to the chromosome. The protein localises to the telomere. The enzyme catalyses NAD(+) + (ADP-D-ribosyl)n-acceptor = nicotinamide + (ADP-D-ribosyl)n+1-acceptor + H(+).. It catalyses the reaction L-aspartyl-[protein] + NAD(+) = 4-O-(ADP-D-ribosyl)-L-aspartyl-[protein] + nicotinamide. It carries out the reaction L-glutamyl-[protein] + NAD(+) = 5-O-(ADP-D-ribosyl)-L-glutamyl-[protein] + nicotinamide. Functionally, poly-ADP-ribosyltransferase involved in various processes such as Wnt signaling pathway, telomere length and vesicle trafficking. Acts as an activator of the Wnt signaling pathway by mediating poly-ADP-ribosylation of AXIN1 and AXIN2, 2 key components of the beta-catenin destruction complex: poly-ADP-ribosylated target proteins are recognized by RNF146, which mediates their ubiquitination and subsequent degradation. Also mediates poly-ADP-ribosylation of BLZF1 and CASC3, followed by recruitment of RNF146 and subsequent ubiquitination. Mediates poly-ADP-ribosylation of TERF1, thereby contributing to the regulation of telomere length. Stimulates 26S proteasome activity. In Mus musculus (Mouse), this protein is Poly [ADP-ribose] polymerase tankyrase-2.